Reading from the N-terminus, the 430-residue chain is Serine--tRNA ligase (430 aa).

Residues 47 to 66 (AQAEQNKASKEAGAAKGRGD) form a disordered region. Residue 231-233 (TSE) participates in L-serine binding. 262-264 (RSE) provides a ligand contact to ATP. Position 285 (glutamate 285) interacts with L-serine. 349 to 352 (EISS) serves as a coordination point for ATP. Residue serine 385 coordinates L-serine.

Belongs to the class-II aminoacyl-tRNA synthetase family. Type-1 seryl-tRNA synthetase subfamily. As to quaternary structure, homodimer. The tRNA molecule binds across the dimer.

It localises to the cytoplasm. It carries out the reaction tRNA(Ser) + L-serine + ATP = L-seryl-tRNA(Ser) + AMP + diphosphate + H(+). It catalyses the reaction tRNA(Sec) + L-serine + ATP = L-seryl-tRNA(Sec) + AMP + diphosphate + H(+). The protein operates within aminoacyl-tRNA biosynthesis; selenocysteinyl-tRNA(Sec) biosynthesis; L-seryl-tRNA(Sec) from L-serine and tRNA(Sec): step 1/1. Catalyzes the attachment of serine to tRNA(Ser). Is also able to aminoacylate tRNA(Sec) with serine, to form the misacylated tRNA L-seryl-tRNA(Sec), which will be further converted into selenocysteinyl-tRNA(Sec). This Paracoccus denitrificans (strain Pd 1222) protein is Serine--tRNA ligase.